We begin with the raw amino-acid sequence, 350 residues long: GDSL esterase/lipase At4g10955 (350 aa).

It belongs to the 'GDSL' lipolytic enzyme family.

The polypeptide is GDSL esterase/lipase At4g10955 (Arabidopsis thaliana (Mouse-ear cress)).